The chain runs to 929 residues: Bifunctional glutamine synthetase adenylyltransferase/adenylyl-removing enzyme (929 aa).

Positions 1–423 (MSTPIDSSRA…RHFEQIFAAR (423 aa)) are adenylyl removase. Residues 433–929 (ARIRPEQSGD…FQLWEDIFGT (497 aa)) are adenylyl transferase.

The protein belongs to the GlnE family. Mg(2+) serves as cofactor.

It catalyses the reaction [glutamine synthetase]-O(4)-(5'-adenylyl)-L-tyrosine + phosphate = [glutamine synthetase]-L-tyrosine + ADP. It carries out the reaction [glutamine synthetase]-L-tyrosine + ATP = [glutamine synthetase]-O(4)-(5'-adenylyl)-L-tyrosine + diphosphate. In terms of biological role, involved in the regulation of glutamine synthetase GlnA, a key enzyme in the process to assimilate ammonia. When cellular nitrogen levels are high, the C-terminal adenylyl transferase (AT) inactivates GlnA by covalent transfer of an adenylyl group from ATP to specific tyrosine residue of GlnA, thus reducing its activity. Conversely, when nitrogen levels are low, the N-terminal adenylyl removase (AR) activates GlnA by removing the adenylyl group by phosphorolysis, increasing its activity. The regulatory region of GlnE binds the signal transduction protein PII (GlnB) which indicates the nitrogen status of the cell. This is Bifunctional glutamine synthetase adenylyltransferase/adenylyl-removing enzyme from Nitrosomonas europaea (strain ATCC 19718 / CIP 103999 / KCTC 2705 / NBRC 14298).